The following is a 180-amino-acid chain: Adenine phosphoribosyltransferase (180 aa).

Belongs to the purine/pyrimidine phosphoribosyltransferase family. In terms of assembly, homodimer.

It localises to the cytoplasm. It catalyses the reaction AMP + diphosphate = 5-phospho-alpha-D-ribose 1-diphosphate + adenine. The protein operates within purine metabolism; AMP biosynthesis via salvage pathway; AMP from adenine: step 1/1. In terms of biological role, catalyzes a salvage reaction resulting in the formation of AMP, that is energically less costly than de novo synthesis. The polypeptide is Adenine phosphoribosyltransferase (Mycoplasma genitalium (strain ATCC 33530 / DSM 19775 / NCTC 10195 / G37) (Mycoplasmoides genitalium)).